The primary structure comprises 90 residues: Large ribosomal subunit protein eL37 (90 aa).

The Zn(2+) site is built by cysteine 19, cysteine 22, cysteine 34, and cysteine 37. The C4-type zinc finger occupies 19–37 (CRRCGRQSYHKQKNSCSSC). The segment covering 21-31 (RCGRQSYHKQK) has biased composition (basic residues). Positions 21 to 59 (RCGRQSYHKQKNSCSSCGYPNPKMRNPGSIKARRRRTIG) are disordered.

This sequence belongs to the eukaryotic ribosomal protein eL37 family. Requires Zn(2+) as cofactor.

In terms of biological role, binds to the 23S rRNA. The sequence is that of Large ribosomal subunit protein eL37 (RPL37) from Encephalitozoon cuniculi (strain GB-M1) (Microsporidian parasite).